Here is a 525-residue protein sequence, read N- to C-terminus: CBL-interacting protein kinase 21 (525 aa).

Residues 87 to 342 (YEMGRALGEG…ITGIRAHEWF (256 aa)) enclose the Protein kinase domain. ATP is bound by residues 93 to 101 (LGEGHFGKV) and Lys-116. Asp-210 acts as the Proton acceptor in catalysis. The tract at residues 228–257 (DFGLSALPQNQRKDGLLHTTCGSPNYIAPE) is activation loop. Residues 372 to 401 (DIETSPAISQINAFQLIGMSSCLDLSGFFE) enclose the NAF domain. A PPI region spans residues 407–436 (ERKIRFVSNYSPTSLFEKIESTVTEKGFQV).

It belongs to the protein kinase superfamily. CAMK Ser/Thr protein kinase family. SNF1 subfamily. Requires Mn(2+) as cofactor.

The enzyme catalyses L-seryl-[protein] + ATP = O-phospho-L-seryl-[protein] + ADP + H(+). It catalyses the reaction L-threonyl-[protein] + ATP = O-phospho-L-threonyl-[protein] + ADP + H(+). Its function is as follows. CIPK serine-threonine protein kinases interact with CBL proteins. Binding of a CBL protein to the regulatory NAF domain of CIPK protein lead to the activation of the kinase in a calcium-dependent manner. This is CBL-interacting protein kinase 21 (CIPK21) from Oryza sativa subsp. japonica (Rice).